Consider the following 93-residue polypeptide: C-C motif chemokine 3 (93 aa).

The N-terminal stretch at 1–24 (MKVAVAALAVLLCAMALCSQVFSA) is a signal peptide. Disulfide bonds link Cys-34–Cys-58 and Cys-35–Cys-74.

It belongs to the intercrine beta (chemokine CC) family. Self-associates. Also heterodimer of MIP-1-alpha(4-69) and MIP-1-beta(3-69). Interacts with CCR1.

Its subcellular location is the secreted. Monokine with inflammatory and chemokinetic properties. Binds to CCR1, CCR4 and CCR5. One of the major HIV-suppressive factors produced by CD8+ T-cells. Recombinant MIP-1-alpha induces a dose-dependent inhibition of different strains of HIV-1, HIV-2, and simian immunodeficiency virus (SIV). In Bos taurus (Bovine), this protein is C-C motif chemokine 3 (CCL3).